The chain runs to 444 residues: Platelet-activating factor acetylhydrolase (444 aa).

The N-terminal stretch at 1 to 21 is a signal peptide; it reads MLPSKLHALFCLCTCLALVYP. 2 N-linked (GlcNAc...) asparagine glycosylation sites follow: asparagine 60 and asparagine 200. Serine 274 functions as the Nucleophile in the catalytic mechanism. Active-site charge relay system residues include aspartate 297 and histidine 352. N-linked (GlcNAc...) asparagine glycosylation is found at asparagine 424 and asparagine 434.

Belongs to the AB hydrolase superfamily. Lipase family. In terms of processing, N-glycosylated. Plasma.

It is found in the secreted. The protein resides in the extracellular space. The catalysed reaction is a 1-O-alkyl-2-acetyl-sn-glycero-3-phosphocholine + H2O = a 1-O-alkyl-sn-glycero-3-phosphocholine + acetate + H(+). The enzyme catalyses 1-O-decyl-2-acetyl-sn-glycero-3-phosphocholine + H2O = 1-O-decyl-sn-glycero-3-phosphocholine + acetate + H(+). It catalyses the reaction 1-O-dodecyl-2-acetyl-sn-glycero-3-phosphocholine + H2O = 1-O-dodecyl-sn-glycero-3-phosphocholine + acetate + H(+). It carries out the reaction 1-O-tetradecyl-2-acetyl-sn-glycero-3-phosphocholine + H2O = 1-O-tetradecyl-sn-glycero-3-phosphocholine + acetate + H(+). The catalysed reaction is 1-O-hexadecyl-2-acetyl-sn-glycero-3-phosphocholine + H2O = 1-O-hexadecyl-sn-glycero-3-phosphocholine + acetate + H(+). The enzyme catalyses 1-O-octadecyl-2-acetyl-sn-glycero-3-phosphocholine + H2O = 1-O-octadecyl-sn-glycero-3-phosphocholine + acetate + H(+). It catalyses the reaction 1-hexadecanoyl-2-acetyl-sn-glycero-3-phosphocholine + H2O = 1-hexadecanoyl-sn-glycero-3-phosphocholine + acetate + H(+). It carries out the reaction 1-hexadecanoyl-2-propionyl-sn-glycero-3-phosphocholine + H2O = propanoate + 1-hexadecanoyl-sn-glycero-3-phosphocholine + H(+). The catalysed reaction is 1-hexadecanoyl-2-butanoyl-sn-glycero-3-phosphocholine + H2O = butanoate + 1-hexadecanoyl-sn-glycero-3-phosphocholine + H(+). The enzyme catalyses 1-hexadecanoyl-2-pentanoyl-sn-glycero-3-phosphocholine + H2O = pentanoate + 1-hexadecanoyl-sn-glycero-3-phosphocholine + H(+). It catalyses the reaction 1-hexadecanoyl-2-glutaroyl-sn-glycero-3-phosphocholine + H2O = glutarate + 1-hexadecanoyl-sn-glycero-3-phosphocholine + H(+). It carries out the reaction 1-hexadecanoyl-2-(5-oxopentanoyl)-sn-glycero-3-phosphocholine + H2O = 5-oxopentanoate + 1-hexadecanoyl-sn-glycero-3-phosphocholine + H(+). The catalysed reaction is 1-hexadecanoyl-2-(9-oxononanoyl)-sn-glycero-3-phosphocholine + H2O = 9-oxononanoate + 1-hexadecanoyl-sn-glycero-3-phosphocholine + H(+). The enzyme catalyses 1-hexadecanoyl-2-[9-hydroperoxy-(10E-octadecenoyl)]-sn-glycero-3-phosphocholine + H2O = 9-hydroperoxy-10E-octadecenoate + 1-hexadecanoyl-sn-glycero-3-phosphocholine + H(+). It catalyses the reaction 1-hexadecanoyl-2-(10-hydroperoxy-8E-octadecenoyl)-sn-glycero-3-phosphocholine + H2O = 10-hydroperoxy-(8E)-octadecenoate + 1-hexadecanoyl-sn-glycero-3-phosphocholine + H(+). In terms of biological role, lipoprotein-associated calcium-independent phospholipase A2 involved in phospholipid catabolism during inflammatory and oxidative stress response. At the lipid-aqueous interface, hydrolyzes the ester bond of fatty acyl group attached at sn-2 position of phospholipids (phospholipase A2 activity). Specifically targets phospholipids with a short-chain fatty acyl group at sn-2 position. Can hydrolyze phospholipids with long fatty acyl chains, only if they carry oxidized functional groups. Hydrolyzes and inactivates platelet-activating factor (PAF, 1-O-alkyl-2-acetyl-sn-glycero-3-phosphocholine), a potent pro-inflammatory signaling lipid that acts through PTAFR on various innate immune cells. Hydrolyzes oxidatively truncated phospholipids carrying an aldehyde group at omega position, preventing their accumulation in low-density lipoprotein (LDL) particles and uncontrolled pro-inflammatory effects. As part of high-density lipoprotein (HDL) particles, can hydrolyze phospholipids having long-chain fatty acyl hydroperoxides at sn-2 position and protect against potential accumulation of these oxylipins in the vascular wall. Catalyzes the release from membrane phospholipids of F2-isoprostanes, lipid biomarkers of cellular oxidative damage. This chain is Platelet-activating factor acetylhydrolase (PLA2G7), found in Bos taurus (Bovine).